Consider the following 475-residue polypeptide: Retrotransposon Gag-like protein 3 (475 aa).

Basic and acidic residues-rich tracts occupy residues 51–66 and 78–87; these read LLRK…KLPE and KTPEFKEPQK. Disordered regions lie at residues 51-101, 152-173, and 397-421; these read LLRK…EPPA, EPKN…APEY, and DPNP…ENQP. The CCHC-type zinc finger occupies 443–462; the sequence is RLCLYCGYPGHFARDCPVKP.

The protein resides in the nucleus. May function as a transcriptional regulator. Plays a role in postnatal myogenesis, may be involved in the regulation of satellite cells self-renewal. The polypeptide is Retrotransposon Gag-like protein 3 (Homo sapiens (Human)).